Here is a 611-residue protein sequence, read N- to C-terminus: MAU2 chromatid cohesion factor homolog (611 aa).

5 TPR repeats span residues Y11 to P46, F91 to E124, F131 to C164, P371 to P404, and A490 to I523. The interval W581–S611 is disordered. Polar residues predominate over residues V585–S611.

Belongs to the SCC4/mau-2 family. As to quaternary structure, component of the cohesin loading complex.

Its subcellular location is the nucleus. The protein localises to the nucleoplasm. Required for association of the cohesin complex with chromatin during interphase. Plays a role in sister chromatid cohesion and normal progression through prometaphase. This is MAU2 chromatid cohesion factor homolog from Nematostella vectensis (Starlet sea anemone).